Consider the following 125-residue polypeptide: Small ribosomal subunit protein uS13 (125 aa).

Residues 90–125 (TRHRRGLPVRGQRTHTNARTKKGPRRAIAGKKKVTK) form a disordered region.

The protein belongs to the universal ribosomal protein uS13 family. Part of the 30S ribosomal subunit. Forms a loose heterodimer with protein S19. Forms two bridges to the 50S subunit in the 70S ribosome.

Its function is as follows. Located at the top of the head of the 30S subunit, it contacts several helices of the 16S rRNA. In the 70S ribosome it contacts the 23S rRNA (bridge B1a) and protein L5 of the 50S subunit (bridge B1b), connecting the 2 subunits; these bridges are implicated in subunit movement. Contacts the tRNAs in the A and P-sites. This Gemmatimonas aurantiaca (strain DSM 14586 / JCM 11422 / NBRC 100505 / T-27) protein is Small ribosomal subunit protein uS13.